A 267-amino-acid polypeptide reads, in one-letter code: MRRIAVMGAAGRMGKALIEAARQAPGAGLTAAIGRPDSTLVGVDAGELAGQGRIGVSLSGELATVLDRFDVLIDFTHPTVTLKNLDICRRAGKAMVIGTTGFSADERRMLDEAAREIPIVFAANFSVGVNLCLKLLDTAARVLGDEVDIEIVEAHHRHKVDAPSGTALRMGEVVASALGRDLQKVAVYGREGQTGARTRETIGFATVRAGDIVGDHTVLFAAEGERVEITHKASSRMTFAKGAVRAALWLEGRDPALYDMQDVLGLR.

Position 8–13 (8–13 (GAAGRM)) interacts with NAD(+). Residue arginine 35 coordinates NADP(+). NAD(+) contacts are provided by residues 98–100 (GTT) and 122–125 (AANF). Histidine 155 serves as the catalytic Proton donor/acceptor. Histidine 156 contributes to the (S)-2,3,4,5-tetrahydrodipicolinate binding site. Residue lysine 159 is the Proton donor of the active site. Position 165 to 166 (165 to 166 (GT)) interacts with (S)-2,3,4,5-tetrahydrodipicolinate.

Belongs to the DapB family.

The protein resides in the cytoplasm. It carries out the reaction (S)-2,3,4,5-tetrahydrodipicolinate + NAD(+) + H2O = (2S,4S)-4-hydroxy-2,3,4,5-tetrahydrodipicolinate + NADH + H(+). It catalyses the reaction (S)-2,3,4,5-tetrahydrodipicolinate + NADP(+) + H2O = (2S,4S)-4-hydroxy-2,3,4,5-tetrahydrodipicolinate + NADPH + H(+). The protein operates within amino-acid biosynthesis; L-lysine biosynthesis via DAP pathway; (S)-tetrahydrodipicolinate from L-aspartate: step 4/4. Catalyzes the conversion of 4-hydroxy-tetrahydrodipicolinate (HTPA) to tetrahydrodipicolinate. The sequence is that of 4-hydroxy-tetrahydrodipicolinate reductase from Azotobacter vinelandii (strain DJ / ATCC BAA-1303).